A 549-amino-acid chain; its full sequence is Glucose-6-phosphate isomerase (549 aa).

Glu-355 acts as the Proton donor in catalysis. Active-site residues include His-386 and Lys-514.

This sequence belongs to the GPI family.

The protein localises to the cytoplasm. It catalyses the reaction alpha-D-glucose 6-phosphate = beta-D-fructose 6-phosphate. It functions in the pathway carbohydrate biosynthesis; gluconeogenesis. The protein operates within carbohydrate degradation; glycolysis; D-glyceraldehyde 3-phosphate and glycerone phosphate from D-glucose: step 2/4. Catalyzes the reversible isomerization of glucose-6-phosphate to fructose-6-phosphate. The sequence is that of Glucose-6-phosphate isomerase from Buchnera aphidicola subsp. Acyrthosiphon pisum (strain 5A).